The following is a 283-amino-acid chain: Shikimate kinase (283 aa).

86-96 (PLKSGLSSSSA) provides a ligand contact to ATP.

The protein belongs to the GHMP kinase family. Archaeal shikimate kinase subfamily.

Its subcellular location is the cytoplasm. It catalyses the reaction shikimate + ATP = 3-phosphoshikimate + ADP + H(+). It participates in metabolic intermediate biosynthesis; chorismate biosynthesis; chorismate from D-erythrose 4-phosphate and phosphoenolpyruvate: step 5/7. The polypeptide is Shikimate kinase (Methanococcus vannielii (strain ATCC 35089 / DSM 1224 / JCM 13029 / OCM 148 / SB)).